The primary structure comprises 466 residues: Ribulose bisphosphate carboxylase large chain (466 aa).

Residue Lys-5 is modified to N6,N6,N6-trimethyllysine. Residues Asn-114 and Thr-164 each contribute to the substrate site. Lys-166 functions as the Proton acceptor in the catalytic mechanism. Position 168 (Lys-168) interacts with substrate. The Mg(2+) site is built by Lys-192, Asp-194, and Glu-195. Lys-192 bears the N6-carboxylysine mark. Catalysis depends on His-285, which acts as the Proton acceptor. Substrate contacts are provided by Arg-286, His-318, and Ser-370.

This sequence belongs to the RuBisCO large chain family. Type I subfamily. As to quaternary structure, heterohexadecamer of 8 large chains and 8 small chains; disulfide-linked. The disulfide link is formed within the large subunit homodimers. Mg(2+) serves as cofactor. The disulfide bond which can form in the large chain dimeric partners within the hexadecamer appears to be associated with oxidative stress and protein turnover.

Its subcellular location is the plastid. It is found in the chloroplast. The enzyme catalyses 2 (2R)-3-phosphoglycerate + 2 H(+) = D-ribulose 1,5-bisphosphate + CO2 + H2O. It catalyses the reaction D-ribulose 1,5-bisphosphate + O2 = 2-phosphoglycolate + (2R)-3-phosphoglycerate + 2 H(+). RuBisCO catalyzes two reactions: the carboxylation of D-ribulose 1,5-bisphosphate, the primary event in carbon dioxide fixation, as well as the oxidative fragmentation of the pentose substrate in the photorespiration process. Both reactions occur simultaneously and in competition at the same active site. The chain is Ribulose bisphosphate carboxylase large chain from Isophysis tasmanica.